The following is a 395-amino-acid chain: MAVTDSLSRAASTLAAVLLLSFGSVAASHIEDQAEQFFRSGHTNNWAVLVCTSRFWFNYRHVANTLSVYRSVKRLGIPDSHIVLMLADDMACNPRNPKPATVFSHKNMELNVYGDDVEVDYRSYEVTVENFLRVLTGRIPPSTPRSKRLLSDDRSNILIYMTGHGGNGFLKFQDSEEITNIELADAFEQMWQKRRYNELLFIIDTCQGASMYERFYSPNIMALASSQVGEDSLSHQPDPAIGVHLMDRYTFYVLEFLEEINPASQTNMNDLFQVCPKSLCVSTPGHRTDLFQRDPKNVLITDFFGSVRKVEITTETIKLQQDSEIMESSYKEDQMDEELMEPLKYAEQLPVAQIIHQKPKLKDWHPPGGFILGLWALIIMVFFKTYGIKHMKFIF.

Residues M1–A27 form the signal peptide. At S28–G368 the chain is on the lumenal side. Positions 79, 82, 118, and 120 each coordinate Ca(2+). The active-site Proton donor is the H164. Catalysis depends on C206, which acts as the Nucleophile; acyl-thioester intermediate. A protein contacts are provided by C206, S232, and S234. Residues D231 to Q236 are autoinhibitory loop. Residues C275 and C280 are joined by a disulfide bond. The helical transmembrane segment at G369–T385 threads the bilayer. Residues Y386–F395 lie on the Cytoplasmic side of the membrane.

Belongs to the peptidase C13 family. Heteropentamer. Part of the GPI-anchor transamidase complex, consisting of PIGK, PIGT, PIGS, PIGU and GAA1. Interacts with GPAA1. Interacts with PIGT; this interaction, via a disulfide link, stabilizes the expression of GAA1 and PIGK and links them to PIGS. In terms of processing, the disulfide bond between PIGK/GPI8 and PIGT is important for normal enzyme activity.

It localises to the endoplasmic reticulum membrane. The protein operates within glycolipid biosynthesis; glycosylphosphatidylinositol-anchor biosynthesis. Its activity is regulated as follows. In the absence of proproteins substrates, exists in an inactive state with a disrupted catalytic site by an autoinhibitory loop. The binding of proprotein substrates, particularly the CSP region, to GPI-T triggers concerted conformational changes that alleviate the inhibition by the autoinhibitory loop. Meanwhile, proprotein residues near the omega- site induce the formation of a catalytic cleft for catalysis, following which the products are released and GPI-T reverts to the inactive state. Functionally, catalytic subunit of the glycosylphosphatidylinositol-anchor (GPI-anchor) transamidase (GPI-T) complex that catalyzes the formation of the linkage between a proprotein and a GPI-anchor and participates in GPI anchored protein biosynthesis. Recognizes diverse proproteins at a C-terminal signal peptide (CSP) region that lacks consensus sequence and replaces it with a GPI-anchor via a transamidation reaction. Transamidation catalysis reaction follows a two-phase mechanism. In the acyl-enzyme phase, the carbonyl group of the proproteins's omega-site undergoes a nucleophilic attack forming an enzyme-substrate thioester bond. Followed by a general acid catalysis that allows CSP releasing, regenerating the carbonyl, and forming the acyl-enzyme intermediate. In the GPI-anchor attachment phase, the amino group of the GPI-anchor's ethanolamine phosphate, the one on third mannose (EtNP3), mediates a nucleophilic attack on the carbonyl of the acyl-enzyme intermediate, replacing the CSP, allowing GPI-anchor attachment to the omega-residue, therefore forming the product and freeing the enzyme. This is GPI-anchor transamidase from Pongo abelii (Sumatran orangutan).